The following is a 309-amino-acid chain: Olfactory receptor 10J5 (309 aa).

Residues 1–25 (MKRKNFTEVSEFIFLGFSSFGKHQI) lie on the Extracellular side of the membrane. Asparagine 5 carries N-linked (GlcNAc...) asparagine glycosylation. Residues 26–46 (TLFVVFLTVYILTLVANIIIV) traverse the membrane as a helical segment. Residues 47 to 54 (TIICIDHH) lie on the Cytoplasmic side of the membrane. A helical membrane pass occupies residues 55–75 (LHTPMYFFLSMLASSETVYTL). Residues 76–99 (VIVPRMLLSLIFHNQPISLAGCAT) are Extracellular-facing. An intrachain disulfide couples cysteine 97 to cysteine 188. Residues 100-120 (QMFFFVILATNNCFLLTAMGY) form a helical membrane-spanning segment. Residues 121–139 (DRYVAICRPLRYTVIMSKG) are Cytoplasmic-facing. A helical membrane pass occupies residues 140 to 160 (LCAQLVCGSFGIGLTMAVLHV). At 161 to 196 (TAMFNLPFCGTVVDHFFCDIYPVMKLSCIDTTINEI) the chain is on the extracellular side. The chain crosses the membrane as a helical span at residues 197–216 (INYGVSSFVIFVPIGLIFIS). At 217 to 236 (YVLVISSILQIASAEGRKKT) the chain is on the cytoplasmic side. The helical transmembrane segment at 237 to 257 (FATCVSHLTVVIVHCGCASIA) threads the bilayer. Residues 258-270 (YLKPKSESSIEKD) lie on the Extracellular side of the membrane. A helical membrane pass occupies residues 271 to 291 (LVLSVTYTIITPLLNPVVYSL). At 292–309 (RNKEVKDALCRVVGRNIS) the chain is on the cytoplasmic side.

This sequence belongs to the G-protein coupled receptor 1 family. In terms of tissue distribution, expressed in both the aorta, the coronary artery and umbilical vein endothelial cells (HUVECs) (at protein level).

The protein localises to the cell membrane. Olfactory receptor. Activated by the synthetic floral odorant, lyral, and by alpha-cedrene, a sesquiterpene constituent of cedarwood oil. Its activation increases intracellular Ca(2+). Acts as a key regulator of myogenesis through its actions on cell migration and adhesion by activating the Ca(2+)-dependent AKT signal transduction pathway. Also acts as a regulator of angiogenesis. Moreover, plays a role in the regulation of lipid accumulation in hepatocytes via the cAMP-PKA pathway. May be involved in sperm chemotaxis and motility. The protein is Olfactory receptor 10J5 of Homo sapiens (Human).